The following is a 1245-amino-acid chain: Structural polyprotein (1245 aa).

The segment at 1–106 (MNRGFFNMLG…KPKPGKRQRM (106 aa)) is disordered. A host transcription inhibition region spans residues 37–70 (GLASQIQQLTTAVSALVIGQATRPQPPRPRPPPR). Polar residues predominate over residues 38 to 49 (LASQIQQLTTAV). A Nuclear localization signal motif is present at residues 63-100 (PRPRPPPRQKKQAPKQPPKPKKPKTQEKKKKQPAKPKP). Positions 67–106 (PPPRQKKQAPKQPPKPKKPKTQEKKKKQPAKPKPGKRQRM) are enriched in basic residues. The segment at 86–115 (KTQEKKKKQPAKPKPGKRQRMALKLEADRL) is binding to the viral RNA. A ribosome-binding region spans residues 100–114 (PGKRQRMALKLEADR). The 151-residue stretch at 114–264 (RLFDVKNEDG…KTTPEGTEEW (151 aa)) folds into the Peptidase S3 domain. The Charge relay system role is filled by H141. The short motif at 146–156 (IDHPVLSKLKF) is the Nuclear export signal element. The tract at residues 157 to 162 (TKSSAY) is interaction with spike glycoprotein E2. Catalysis depends on D163, which acts as the Charge relay system. The tract at residues 185–195 (PEGFYNWHHGA) is dimerization of the capsid protein. The active-site Charge relay system is the S215. Residues 221-225 (DNSGR) form a dimerization of the capsid protein region. Positions 249–253 (SKGKT) are interaction with spike glycoprotein E2. Residues 265-279 (SAAPLVTAMCLLGNV) form a functions as an uncleaved signal peptide for the precursor of protein E3/E2 region. Residue N278 is glycosylated (N-linked (GlcNAc...) asparagine; by host). Intrachain disulfides connect C283-C289, C480-C594, C529-C554, and C531-C548. Topologically, residues 329-690 (SVIDDFTLTS…HEIVQHYYHR (362 aa)) are extracellular. The N-linked (GlcNAc...) asparagine; by host glycan is linked to N524. N-linked (GlcNAc...) asparagine; by host glycosylation is present at N646. Residues 682 to 730 (EIVQHYYHRHPVYTILAVASATVAMMIGVTVAVLCACKARRECLTPYAL) are a coiled coil. Residues 691–718 (HPVYTILAVASATVAMMIGVTVAVLCAC) form a helical membrane-spanning segment. The tract at residues 719–723 (KARRE) is interaction with the capsid protein. The Cytoplasmic segment spans residues 719 to 751 (KARRECLTPYALAPNAVIPTSLALLCCVRSANA). S-palmitoyl cysteine; by host attachment occurs at residues C724, C744, and C745. C724 and C745 are joined by a disulfide. Residues 752–763 (ETFTETMSYLWS) are Extracellular-facing. Residues 764–784 (NSQPFFWVQLCIPLAAFIVLM) form a helical membrane-spanning segment. Residue R785 is a topological domain, cytoplasmic. Residues 786-806 (CCSCCLPFLVVAGAYLAKVDA) traverse the membrane as a helical segment. The Extracellular portion of the chain corresponds to 807–1214 (YEHATTVPNV…QAAISKTSWS (408 aa)). 4 disulfide bridges follow: C855–C920, C868–C900, C869–C902, and C874–C884. The tract at residues 890 to 907 (VYPFMWGGAQCFCDSENS) is E1 fusion peptide loop. N945 and N1051 each carry an N-linked (GlcNAc...) asparagine; by host glycan. 4 disulfide bridges follow: C1065-C1077, C1107-C1182, C1112-C1186, and C1134-C1176. Residues 1196–1245 (TPHKNDQEFQAAISKTSWSWLFALFGGASSLLIIGLMIFACSMMLTSTRR) adopt a coiled-coil conformation. A helical membrane pass occupies residues 1215–1239 (WLFALFGGASSLLIIGLMIFACSMM). The Cytoplasmic portion of the chain corresponds to 1240 to 1245 (LTSTRR).

It belongs to the alphavirus structural polyprotein family. In terms of assembly, homomultimer. Interacts with host karyopherin KPNA4; this interaction allows the nuclear import of the viral capsid protein. Interacts with spike glycoprotein E2. Interacts with host IRAK1; the interaction leads to inhibition of IRAK1-dependent signaling. The precursor of protein E3/E2 and E1 form a heterodimer shortly after synthesis. As to quaternary structure, the precursor of protein E3/E2 and E1 form a heterodimer shortly after synthesis. Processing of the precursor of protein E3/E2 into E2 and E3 results in a heterodimer of the spike glycoproteins E2 and E1. Spike at virion surface are constituted of a trimer of E2-E1 heterodimers. After target cell attachment and endocytosis, E1 change conformation to form homotrimers. E2-E1 heterodimers interact with host VLDLR or LRP8/APOER2 to mediate viral entry. Interacts with 6K protein. In terms of assembly, interacts with spike glycoprotein E1. Processing of the precursor of protein E3/E2 into E2 and E3 results in a heterodimer of the spike glycoproteins E2 and E1. Spike at virion surface are constituted of a trimer of E2-E1 heterodimers. E2-E1 heterodimers interact with host VLDLR or LRP8/APOER2 to mediate viral entry. Interacts with 6K protein. Interacts with the capsid protein. Oligomer. Interacts with spike glycoprotein E1. Interacts with spike glycoprotein E2. Specific enzymatic cleavages in vivo yield mature proteins. Capsid protein is auto-cleaved during polyprotein translation, unmasking a signal peptide at the N-terminus of the precursor of E3/E2. The remaining polyprotein is then targeted to the host endoplasmic reticulum, where host signal peptidase cleaves it into pE2, 6K and E1 proteins. pE2 is further processed to mature E3 and E2 by host furin in trans-Golgi vesicle. In terms of processing, palmitoylated via thioester bonds. These palmitoylations may induce disruption of the C-terminus transmembrane. This would result in the reorientation of E2 C-terminus from lumenal to cytoplasmic side. Post-translationally, N-glycosylated. Palmitoylated via thioester bonds.

The protein localises to the virion. It is found in the host cytoplasm. Its subcellular location is the host cell membrane. It localises to the host nucleus. The protein resides in the virion membrane. The protein localises to the host Golgi apparatus. It is found in the host trans-Golgi network. Its subcellular location is the host endoplasmic reticulum. The catalysed reaction is Autocatalytic release of the core protein from the N-terminus of the togavirus structural polyprotein by hydrolysis of a -Trp-|-Ser- bond.. Its activity is regulated as follows. The channel activity is blocked by 5-N, N-Hexamethylene amiloride. Its function is as follows. Forms an icosahedral capsid with a T=4 symmetry composed of 240 copies of the capsid protein surrounded by a lipid membrane through which penetrate 80 spikes composed of trimers of E1-E2 heterodimers. The capsid protein binds to the viral RNA genome at a site adjacent to a ribosome binding site for viral genome translation following genome release. Possesses a protease activity that results in its autocatalytic cleavage from the nascent structural protein. Following its self-cleavage, the capsid protein transiently associates with ribosomes, and within several minutes the protein binds to viral RNA and rapidly assembles into icosahedric core particles. The resulting nucleocapsid eventually associates with the cytoplasmic domain of the spike glycoprotein E2 at the cell membrane, leading to budding and formation of mature virions. In case of infection, new virions attach to target cells and after clathrin-mediated endocytosis their membrane fuses with the host endosomal membrane. This leads to the release of the nucleocapsid into the cytoplasm, followed by an uncoating event necessary for the genomic RNA to become accessible. The uncoating might be triggered by the interaction of capsid proteins with ribosomes. Binding of ribosomes would release the genomic RNA since the same region is genomic RNA-binding and ribosome-binding. Specifically inhibits interleukin-1 receptor-associated kinase 1/IRAK1-dependent signaling during viral entry, representing a means by which the alphaviruses may evade innate immune detection and activation prior to viral gene expression. Provides the signal sequence for the translocation of the precursor of protein E3/E2 to the host endoplasmic reticulum. Furin-cleaved E3 remains associated with spike glycoprotein E1 and mediates pH protection of the latter during the transport via the secretory pathway. After virion release from the host cell, the assembly protein E3 is gradually released in the extracellular space. In terms of biological role, plays a role in viral attachment to target host cell, by binding to the cell receptors VLDLR or LRP8/APOER2. Synthesized as a pE2 precursor which is processed by furin at the cell membrane just before virion budding, giving rise to E2-E1 heterodimer. The pE2-E1 heterodimer is stable, whereas E2-E1 is unstable and dissociate at low pH. pE2 is processed at the last step, presumably to avoid E1 fusion activation before its final export to cell surface. E2 C-terminus contains a transitory transmembrane that would be disrupted by palmitoylation, resulting in reorientation of the C-terminal tail from lumenal to cytoplasmic side. This step is critical since E2 C-terminus is involved in budding by interacting with capsid proteins. This release of E2 C-terminus in cytoplasm occurs lately in protein export, and precludes premature assembly of particles at the endoplasmic reticulum membrane. Functionally, acts as a viroporin that participates in virus glycoprotein processing and transport to the plasma membrane, cell permeabilization and budding of viral particles. Disrupts the calcium homeostasis of the cell, probably at the endoplasmic reticulum level resulting in the increased levels of cytoplasmic calcium. Because of its lipophilic properties, the 6K protein is postulated to influence the selection of lipids that interact with the transmembrane domains of the glycoproteins, which, in turn, affects the deformability of the bilayer required for the extreme curvature that occurs as budding proceeds. Present in low amount in virions, about 3% compared to viral glycoproteins. Its function is as follows. Class II viral fusion protein. Fusion activity is inactive as long as E1 is bound to E2 in mature virion. After virus attachment to target cell via host VLDLR or LRP8/APOER2 and endocytosis, acidification of the endosome induces dissociation of E1/E2 heterodimer and concomitant trimerization of the E1 subunits. This E1 trimer is fusion active, and promotes release of viral nucleocapsid in cytoplasm after endosome and viral membrane fusion. Efficient fusion requires the presence of cholesterol and sphingolipid in the target membrane. In Acrocephalus scirpaceus (Eurasian reed-warbler), this protein is Structural polyprotein.